Here is a 172-residue protein sequence, read N- to C-terminus: Orotate phosphoribosyltransferase (172 aa).

5-phospho-alpha-D-ribose 1-diphosphate is bound by residues arginine 88, lysine 89, lysine 92, histidine 94, and 113–121 (EDVTTSGGS). Orotate is bound by residues threonine 117 and arginine 145.

It belongs to the purine/pyrimidine phosphoribosyltransferase family. PyrE subfamily. In terms of assembly, homodimer. Mg(2+) is required as a cofactor.

The enzyme catalyses orotidine 5'-phosphate + diphosphate = orotate + 5-phospho-alpha-D-ribose 1-diphosphate. It functions in the pathway pyrimidine metabolism; UMP biosynthesis via de novo pathway; UMP from orotate: step 1/2. In terms of biological role, catalyzes the transfer of a ribosyl phosphate group from 5-phosphoribose 1-diphosphate to orotate, leading to the formation of orotidine monophosphate (OMP). This Methanospirillum hungatei JF-1 (strain ATCC 27890 / DSM 864 / NBRC 100397 / JF-1) protein is Orotate phosphoribosyltransferase.